The sequence spans 545 residues: Glucose-6-phosphate isomerase (545 aa).

E351 acts as the Proton donor in catalysis. Residues H382 and K510 contribute to the active site.

This sequence belongs to the GPI family.

The protein localises to the cytoplasm. It carries out the reaction alpha-D-glucose 6-phosphate = beta-D-fructose 6-phosphate. Its pathway is carbohydrate biosynthesis; gluconeogenesis. It participates in carbohydrate degradation; glycolysis; D-glyceraldehyde 3-phosphate and glycerone phosphate from D-glucose: step 2/4. In terms of biological role, catalyzes the reversible isomerization of glucose-6-phosphate to fructose-6-phosphate. This chain is Glucose-6-phosphate isomerase, found in Shewanella baltica (strain OS195).